A 190-amino-acid chain; its full sequence is Xanthine phosphoribosyltransferase 1 (190 aa).

Leucine 20 and asparagine 27 together coordinate xanthine. Position 129-133 (129-133) interacts with 5-phospho-alpha-D-ribose 1-diphosphate; that stretch reads AQGCA. A xanthine-binding site is contributed by lysine 157.

The protein belongs to the purine/pyrimidine phosphoribosyltransferase family. Xpt subfamily. As to quaternary structure, homodimer.

The protein resides in the cytoplasm. The enzyme catalyses XMP + diphosphate = xanthine + 5-phospho-alpha-D-ribose 1-diphosphate. The protein operates within purine metabolism; XMP biosynthesis via salvage pathway; XMP from xanthine: step 1/1. Its function is as follows. Converts the preformed base xanthine, a product of nucleic acid breakdown, to xanthosine 5'-monophosphate (XMP), so it can be reused for RNA or DNA synthesis. The sequence is that of Xanthine phosphoribosyltransferase 1 from Clostridium perfringens (strain ATCC 13124 / DSM 756 / JCM 1290 / NCIMB 6125 / NCTC 8237 / Type A).